A 555-amino-acid polypeptide reads, in one-letter code: Formate--tetrahydrofolate ligase (555 aa).

ATP is bound at residue 64–71 (TPAGEGKT).

It belongs to the formate--tetrahydrofolate ligase family.

It catalyses the reaction (6S)-5,6,7,8-tetrahydrofolate + formate + ATP = (6R)-10-formyltetrahydrofolate + ADP + phosphate. It functions in the pathway one-carbon metabolism; tetrahydrofolate interconversion. This is Formate--tetrahydrofolate ligase from Dinoroseobacter shibae (strain DSM 16493 / NCIMB 14021 / DFL 12).